Reading from the N-terminus, the 208-residue chain is MGLGARGAWAALLLGTLQVLALLGAAHESAAMAASANIENSGLPHNSSANSTETLQHVPSDHTNETSNSTVKPPTSVASDSSNTTVTTMKPTAASNTTTPGMVSTNMTSTTLKSTPKTTSVSQNTSQISTSTMTVTHNSSVTSAASSVTITTTMHSEAKKGSKFDTGSFVGGIVLTLGVLSILYIGCKMYYSRRGIRYRTIDEHDAII.

The signal sequence occupies residues 1 to 26; it reads MGLGARGAWAALLLGTLQVLALLGAA. The Extracellular portion of the chain corresponds to 27 to 166; sequence HESAAMAASA…EAKKGSKFDT (140 aa). Positions 42–57 are enriched in polar residues; the sequence is GLPHNSSANSTETLQH. Positions 42-125 are disordered; that stretch reads GLPHNSSANS…PKTTSVSQNT (84 aa). Asn-46, Asn-50, Asn-64, Asn-68, Asn-83, Asn-96, and Asn-106 each carry an N-linked (GlcNAc...) asparagine glycan. The segment covering 65-107 has biased composition (polar residues); it reads ETSNSTVKPPTSVASDSSNTTVTTMKPTAASNTTTPGMVSTNM. The segment covering 108 to 122 has biased composition (low complexity); it reads TSTTLKSTPKTTSVS. Residues Asn-124 and Asn-138 are each glycosylated (N-linked (GlcNAc...) asparagine). The helical transmembrane segment at 167–187 threads the bilayer; that stretch reads GSFVGGIVLTLGVLSILYIGC. The Cytoplasmic portion of the chain corresponds to 188–208; that stretch reads KMYYSRRGIRYRTIDEHDAII.

This sequence belongs to the CD164 family. In terms of tissue distribution, ubiquitous. Not expressed in ovary. Expressed in keratinocytes.

It localises to the membrane. Implicated in oncotic cell death, characterized by cell swelling, organelle swelling, vacuolization and increased membrane permeability. In Homo sapiens (Human), this protein is Porimin (TMEM123).